A 280-amino-acid polypeptide reads, in one-letter code: Undecaprenyl-diphosphatase (280 aa).

Transmembrane regions (helical) follow at residues 1–21 (MTIL…FLPV), 41–61 (FVRA…LVLY), 87–107 (FDLY…GFLF), 115–135 (LGSV…MLFV), 147–167 (ITYP…FLPG), 186–206 (KAAA…ATLL), 226–246 (VLLV…KFFI), and 260–280 (YRIL…SLAV).

The protein belongs to the UppP family.

Its subcellular location is the cell inner membrane. It catalyses the reaction di-trans,octa-cis-undecaprenyl diphosphate + H2O = di-trans,octa-cis-undecaprenyl phosphate + phosphate + H(+). Functionally, catalyzes the dephosphorylation of undecaprenyl diphosphate (UPP). Confers resistance to bacitracin. The sequence is that of Undecaprenyl-diphosphatase from Porphyromonas gingivalis (strain ATCC BAA-308 / W83).